The following is an 89-amino-acid chain: Small ribosomal subunit protein uS15 (89 aa).

The span at 1 to 13 (MYLTSEKKEEIFS) shows a compositional bias: basic and acidic residues. Positions 1–24 (MYLTSEKKEEIFSKHGKGKNDTGS) are disordered.

The protein belongs to the universal ribosomal protein uS15 family. In terms of assembly, part of the 30S ribosomal subunit. Forms a bridge to the 50S subunit in the 70S ribosome, contacting the 23S rRNA.

One of the primary rRNA binding proteins, it binds directly to 16S rRNA where it helps nucleate assembly of the platform of the 30S subunit by binding and bridging several RNA helices of the 16S rRNA. Its function is as follows. Forms an intersubunit bridge (bridge B4) with the 23S rRNA of the 50S subunit in the ribosome. This Christiangramia forsetii (strain DSM 17595 / CGMCC 1.15422 / KT0803) (Gramella forsetii) protein is Small ribosomal subunit protein uS15.